The following is a 261-amino-acid chain: Cytochrome c oxidase subunit 3 (261 aa).

At M1–P15 the chain is on the mitochondrial matrix side. Residues W16 to W34 traverse the membrane as a helical segment. At F35–T40 the chain is on the mitochondrial intermembrane side. The helical transmembrane segment at T41–T66 threads the bilayer. The Mitochondrial matrix portion of the chain corresponds to F67–T72. A helical transmembrane segment spans residues P73 to S105. At L106–E128 the chain is on the mitochondrial intermembrane side. A helical membrane pass occupies residues V129–M152. Over E153–N155 the chain is Mitochondrial matrix. Residues R156–E183 form a helical membrane-spanning segment. At A184–D190 the chain is on the mitochondrial intermembrane side. The chain crosses the membrane as a helical span at residues G191–L223. Over K224–H232 the chain is Mitochondrial matrix. The helical transmembrane segment at F233–I256 threads the bilayer. At Y257–S261 the chain is on the mitochondrial intermembrane side.

This sequence belongs to the cytochrome c oxidase subunit 3 family. As to quaternary structure, component of the cytochrome c oxidase (complex IV, CIV), a multisubunit enzyme composed of 14 subunits. The complex is composed of a catalytic core of 3 subunits MT-CO1, MT-CO2 and MT-CO3, encoded in the mitochondrial DNA, and 11 supernumerary subunits COX4I, COX5A, COX5B, COX6A, COX6B, COX6C, COX7A, COX7B, COX7C, COX8 and NDUFA4, which are encoded in the nuclear genome. The complex exists as a monomer or a dimer and forms supercomplexes (SCs) in the inner mitochondrial membrane with NADH-ubiquinone oxidoreductase (complex I, CI) and ubiquinol-cytochrome c oxidoreductase (cytochrome b-c1 complex, complex III, CIII), resulting in different assemblies (supercomplex SCI(1)III(2)IV(1) and megacomplex MCI(2)III(2)IV(2)).

Its subcellular location is the mitochondrion inner membrane. It catalyses the reaction 4 Fe(II)-[cytochrome c] + O2 + 8 H(+)(in) = 4 Fe(III)-[cytochrome c] + 2 H2O + 4 H(+)(out). Functionally, component of the cytochrome c oxidase, the last enzyme in the mitochondrial electron transport chain which drives oxidative phosphorylation. The respiratory chain contains 3 multisubunit complexes succinate dehydrogenase (complex II, CII), ubiquinol-cytochrome c oxidoreductase (cytochrome b-c1 complex, complex III, CIII) and cytochrome c oxidase (complex IV, CIV), that cooperate to transfer electrons derived from NADH and succinate to molecular oxygen, creating an electrochemical gradient over the inner membrane that drives transmembrane transport and the ATP synthase. Cytochrome c oxidase is the component of the respiratory chain that catalyzes the reduction of oxygen to water. Electrons originating from reduced cytochrome c in the intermembrane space (IMS) are transferred via the dinuclear copper A center (CU(A)) of subunit 2 and heme A of subunit 1 to the active site in subunit 1, a binuclear center (BNC) formed by heme A3 and copper B (CU(B)). The BNC reduces molecular oxygen to 2 water molecules using 4 electrons from cytochrome c in the IMS and 4 protons from the mitochondrial matrix. This chain is Cytochrome c oxidase subunit 3 (MT-CO3), found in Gazella subgutturosa (Goitred gazelle).